The chain runs to 60 residues: Small ribosomal subunit protein uS10 (60 aa).

This sequence belongs to the universal ribosomal protein uS10 family.

In Zea mays (Maize), this protein is Small ribosomal subunit protein uS10 (RPS20).